The primary structure comprises 423 residues: D-tagatose-1,6-bisphosphate aldolase subunit GatZ (423 aa).

It belongs to the GatZ/KbaZ family. GatZ subfamily. In terms of assembly, forms a complex with GatY.

The protein operates within carbohydrate metabolism; D-tagatose 6-phosphate degradation; D-glyceraldehyde 3-phosphate and glycerone phosphate from D-tagatose 6-phosphate: step 2/2. Component of the tagatose-1,6-bisphosphate aldolase GatYZ that is required for full activity and stability of the Y subunit. Could have a chaperone-like function for the proper and stable folding of GatY. When expressed alone, GatZ does not show any aldolase activity. Is involved in the catabolism of galactitol. The chain is D-tagatose-1,6-bisphosphate aldolase subunit GatZ from Salmonella dublin (strain CT_02021853).